Reading from the N-terminus, the 924-residue chain is Isoleucine--tRNA ligase (924 aa).

The short motif at 58–68 (PYANGQIHVGH) is the 'HIGH' region element. Glu561 is an L-isoleucyl-5'-AMP binding site. The short motif at 602–606 (KMSKS) is the 'KMSKS' region element. Lys605 serves as a coordination point for ATP. Zn(2+) is bound by residues Cys887, Cys890, Cys907, and Cys910.

The protein belongs to the class-I aminoacyl-tRNA synthetase family. IleS type 1 subfamily. In terms of assembly, monomer. Zn(2+) serves as cofactor.

The protein localises to the cytoplasm. It catalyses the reaction tRNA(Ile) + L-isoleucine + ATP = L-isoleucyl-tRNA(Ile) + AMP + diphosphate. Functionally, catalyzes the attachment of isoleucine to tRNA(Ile). As IleRS can inadvertently accommodate and process structurally similar amino acids such as valine, to avoid such errors it has two additional distinct tRNA(Ile)-dependent editing activities. One activity is designated as 'pretransfer' editing and involves the hydrolysis of activated Val-AMP. The other activity is designated 'posttransfer' editing and involves deacylation of mischarged Val-tRNA(Ile). The sequence is that of Isoleucine--tRNA ligase from Dichelobacter nodosus (strain VCS1703A).